Consider the following 926-residue polypeptide: Alpha-L-rhamnosidase (926 aa).

The signal sequence occupies residues 1–25 (MILHKSVFKSYIYVLTYFVFFSVMS). Cysteine 26 is lipidated: N-palmitoyl cysteine. Cysteine 26 carries S-diacylglycerol cysteine lipidation. Alpha-L-rhamnose is bound by residues aspartate 504, 508 to 510 (RDE), aspartate 517, and tryptophan 569. Glutamate 510 serves as the catalytic Proton donor. Glutamate 779 functions as the Proton acceptor in the catalytic mechanism. Alpha-L-rhamnose is bound at residue histidine 800.

It belongs to the glycosyl hydrolase 78 family.

It localises to the cell membrane. It catalyses the reaction Hydrolysis of terminal non-reducing alpha-L-rhamnose residues in alpha-L-rhamnosides.. Alpha-L-rhamnosidase involved in ulvan degradation. Ulvan is the main polysaccharide component of the Ulvales (green seaweed) cell wall. It is composed of disaccharide building blocks comprising 3-sulfated rhamnose (Rha3S) linked to D-glucuronic acid (GlcA), L-iduronic acid (IduA), or D-xylose (Xyl). Alpha-L-rhamnosidase converts Rha-Xyl-Rha3S, the product of a sulfatase acting on Rha3S-Xyl-Rha3S oligosaccharides, to Rha and Xyl-Rha3S. The enzyme is able to degrade p-nitrophenyl-alpha-L-rhamnopyranoside (PNP-Rha) in vitro. The sequence is that of Alpha-L-rhamnosidase from Formosa agariphila (strain DSM 15362 / KCTC 12365 / LMG 23005 / KMM 3901 / M-2Alg 35-1).